The primary structure comprises 444 residues: D(2) dopamine receptor (444 aa).

The Extracellular portion of the chain corresponds to 1–37 (MDPLNLSWYDDDLERQNWSRPFNGSEGKADRPHYNYY). 3 N-linked (GlcNAc...) asparagine glycosylation sites follow: N5, N17, and N23. The helical transmembrane segment at 38–60 (AMLLTLLIFIIVFGNVLVCMAVS) threads the bilayer. The Cytoplasmic portion of the chain corresponds to 61 to 70 (REKALQTTTN). The helical transmembrane segment at 71 to 93 (YLIVSLAVADLLVATLVMPWVVY) threads the bilayer. Over 94-108 (LEVVGEWKFSRIHCD) the chain is Extracellular. An intrachain disulfide couples C107 to C182. A helical membrane pass occupies residues 109-130 (IFVTLDVMMCTASILNLCAISI). Over 131–151 (DRYTAVAMPMLYNTRYSSKRR) the chain is Cytoplasmic. The helical transmembrane segment at 152–172 (VTVMIAIVWVLSFTISCPLLF) threads the bilayer. Residues 173 to 188 (GLNNTDQNECIIANPA) lie on the Extracellular side of the membrane. The helical transmembrane segment at 189-213 (FVVYSSIVSFYVPFIVTLLVYIKIY) threads the bilayer. The interaction with PPP1R9B stretch occupies residues 211 to 374 (KIYIVLRKRR…SQQKEKKATQ (164 aa)). The Cytoplasmic portion of the chain corresponds to 214–374 (IVLRKRRKRV…SQQKEKKATQ (161 aa)). The interval 282 to 329 (EMLSSTSPPERTRYSPIPPSHHQLTLPDPSHHGLHSNPDSPAKPEKNG) is disordered. A helical transmembrane segment spans residues 375–396 (MLAIVLGVFIICWLPFFITHIL). The Extracellular segment spans residues 397 to 410 (NIHCDCNIPPVLYS). C400 and C402 are oxidised to a cystine. The helical transmembrane segment at 411–432 (AFTWLGYVNSAVNPIIYTTFNI) threads the bilayer. Residues 433-444 (EFRKAFMKILHC) are Cytoplasmic-facing. Residue C444 is the site of S-palmitoyl cysteine attachment.

The protein belongs to the G-protein coupled receptor 1 family. In terms of assembly, forms homo- and heterooligomers with DRD4. The interaction with DRD4 may modulate agonist-induced downstream signaling. Interacts with CADPS and CADPS2. Interacts with GPRASP1, PPP1R9B and CLIC6. Interacts with ARRB2. Interacts with HTR2A. Interacts with DRD1. Interacts with KCNA2. In terms of processing, palmitoylated. Palmitoylation which is required for proper localization to the plasma membrane and stability of the receptor could be carried on by ZDHHC4, ZDHHC3 and ZDHHC8. As to expression, expressed in the anterior lobe of the pituitary gland. Expressed ventral tegmental area of the midbrain and the pars compacta of the substantia nigra. Expressed seven times more than isoform short in the caudate nucleus. Expressed in the anterior lobe of the pituitary gland. Expressed in the caudate nucleus. Not expressed in the wider brain.

The protein resides in the cell membrane. Its subcellular location is the golgi apparatus membrane. Dopamine receptor whose activity is mediated by G proteins which inhibit adenylyl cyclase. Positively regulates postnatal regression of retinal hyaloid vessels via suppression of VEGFR2/KDR activity, downstream of OPN5. The protein is D(2) dopamine receptor (Drd2) of Rattus norvegicus (Rat).